Here is a 318-residue protein sequence, read N- to C-terminus: Putative HTH-type transcriptional regulatory protein MJ1164 (318 aa).

An HTH cro/C1-type domain is found at 131 to 189 (LKEVREAMGISVGKLAEVAGVSRKAIYKYETQMANPSVDVALKIEEFLDVPLVKGIDLF). Positions 142–161 (VGKLAEVAGVSRKAIYKYET) form a DNA-binding region, H-T-H motif.

This Methanocaldococcus jannaschii (strain ATCC 43067 / DSM 2661 / JAL-1 / JCM 10045 / NBRC 100440) (Methanococcus jannaschii) protein is Putative HTH-type transcriptional regulatory protein MJ1164.